Here is a 355-residue protein sequence, read N- to C-terminus: Sorbitol dehydrogenase (355 aa).

Ala-2 bears the N-acetylalanine mark. Cys-43 serves as a coordination point for Zn(2+). A substrate-binding site is contributed by Tyr-49. Residues His-68 and Glu-69 each contribute to the Zn(2+) site. Glu-154 provides a ligand contact to substrate. NAD(+) contacts are provided by residues Ile-182, Asp-202, Arg-207, 271-273 (VGL), and 295-297 (IFR). Substrate-binding residues include Arg-297 and Tyr-298.

The protein belongs to the zinc-containing alcohol dehydrogenase family. In terms of assembly, homotetramer. Requires Zn(2+) as cofactor. As to expression, expressed in liver.

It localises to the mitochondrion membrane. Its subcellular location is the cell projection. The protein resides in the cilium. It is found in the flagellum. It catalyses the reaction keto-D-fructose + NADH + H(+) = D-sorbitol + NAD(+). In terms of biological role, polyol dehydrogenase that catalyzes the reversible NAD(+)-dependent oxidation of various sugar alcohols. Is active with D-sorbitol (D-glucitol) as substrate, leading to the C2-oxidized product D-fructose. Is a key enzyme in the polyol pathway that interconverts glucose and fructose via sorbitol, which constitutes an important alternate route for glucose metabolism. In Gallus gallus (Chicken), this protein is Sorbitol dehydrogenase (SORD).